The sequence spans 430 residues: Rosmarinate synthase (430 aa).

The Proton acceptor role is filled by histidine 152. Residues 178 to 210 are disordered; it reads TPLPHFDRSSLSARNPPQPQFSHAEYQPPPTLE. The active-site Proton acceptor is aspartate 377.

Belongs to the plant acyltransferase family.

It catalyses the reaction (2R)-3-(3,4-dihydroxyphenyl)lactate + (E)-caffeoyl-CoA = (R)-rosmarinate + CoA. Its function is as follows. Involved in the biosynthesis of rosmarinic acid, a compound with antiviral, antimicrobial and anti-inflammatory activities. Can use 4-coumaroyl- and caffeoyl-CoA as hydroxycinnamoyl donors and 4-Hydroxyphenyllactate and 3.4-Dihydroxyphenyllactate, but not shikimate or quinate, as hydroxycinnamoyl acceptors. Can also putatively catalyze amide formation with D-amino acids as acceptors. The polypeptide is Rosmarinate synthase (RAS) (Plectranthus scutellarioides (Coleus)).